The sequence spans 315 residues: Small ribosomal subunit protein uS2 (315 aa).

Residues 250 to 315 (LLEQGDAAKA…TESEKAPVSE (66 aa)) are disordered. Composition is skewed to basic and acidic residues over residues 272–282 (VSAKNEAKSED) and 297–315 (TEAK…PVSE).

The protein belongs to the universal ribosomal protein uS2 family.

This Clavibacter michiganensis subsp. michiganensis (strain NCPPB 382) protein is Small ribosomal subunit protein uS2.